A 451-amino-acid chain; its full sequence is 2,4-dinitrotoluene dioxygenase system, large oxygenase component (451 aa).

Residues 42–126 enclose the Rieske domain; the sequence is WLFLTHDSLI…LQSVPFEKEL (85 aa). 4 residues coordinate [2Fe-2S] cluster: cysteine 84, histidine 86, cysteine 104, and histidine 107. Fe cation-binding residues include histidine 211, histidine 216, and aspartate 365.

It belongs to the bacterial ring-hydroxylating dioxygenase alpha subunit family. In terms of assembly, the 2,4-dinitrotoluene dioxygenase (DNTDO) multicomponent enzyme system is composed of an electron transfer component and a dioxygenase component (iron sulfur protein (ISP)). The electron transfer component is composed of a ferredoxin reductase (DntAa) and a ferredoxin (DntAb), and the dioxygenase component is formed of a large alpha subunit (DntAc) and a small beta subunit (DntAd). [2Fe-2S] cluster serves as cofactor. It depends on Fe(2+) as a cofactor.

The catalysed reaction is 2,4-dinitrotoluene + NADH + O2 = 4-methyl-5-nitrocatechol + nitrite + NAD(+). Component of the 2,4-dinitrotoluene dioxygenase (DNTDO) multicomponent enzyme system which catalyzes the incorporation of both atoms of molecular oxygen into 2,4-dinitrotoluene (DNT) to form 4-methyl-5-nitrocatechol (MNC) and nitrite. The alpha subunit has a catalytic role in the holoenzyme. Also able to convert naphthalene to cis-(1R,2S)-dihydroxy-1,2-dihydronaphthalene. The polypeptide is 2,4-dinitrotoluene dioxygenase system, large oxygenase component (Burkholderia sp. (strain RASC)).